The primary structure comprises 285 residues: Bifunctional protein FolD (285 aa).

NADP(+) contacts are provided by residues 163 to 165 (GRS) and serine 188.

Belongs to the tetrahydrofolate dehydrogenase/cyclohydrolase family. Homodimer.

The enzyme catalyses (6R)-5,10-methylene-5,6,7,8-tetrahydrofolate + NADP(+) = (6R)-5,10-methenyltetrahydrofolate + NADPH. It catalyses the reaction (6R)-5,10-methenyltetrahydrofolate + H2O = (6R)-10-formyltetrahydrofolate + H(+). It participates in one-carbon metabolism; tetrahydrofolate interconversion. Its function is as follows. Catalyzes the oxidation of 5,10-methylenetetrahydrofolate to 5,10-methenyltetrahydrofolate and then the hydrolysis of 5,10-methenyltetrahydrofolate to 10-formyltetrahydrofolate. The protein is Bifunctional protein FolD of Lactococcus lactis subsp. cremoris (strain MG1363).